Here is a 631-residue protein sequence, read N- to C-terminus: 1-deoxy-D-xylulose-5-phosphate synthase (631 aa).

Residues H87 and 128–130 (GHS) contribute to the thiamine diphosphate site. D159 is a binding site for Mg(2+). Thiamine diphosphate is bound by residues 160–161 (GA), N188, F295, and E377. Residue N188 coordinates Mg(2+).

Belongs to the transketolase family. DXPS subfamily. As to quaternary structure, homodimer. Mg(2+) serves as cofactor. It depends on thiamine diphosphate as a cofactor.

It catalyses the reaction D-glyceraldehyde 3-phosphate + pyruvate + H(+) = 1-deoxy-D-xylulose 5-phosphate + CO2. Its pathway is metabolic intermediate biosynthesis; 1-deoxy-D-xylulose 5-phosphate biosynthesis; 1-deoxy-D-xylulose 5-phosphate from D-glyceraldehyde 3-phosphate and pyruvate: step 1/1. Catalyzes the acyloin condensation reaction between C atoms 2 and 3 of pyruvate and glyceraldehyde 3-phosphate to yield 1-deoxy-D-xylulose-5-phosphate (DXP). The protein is 1-deoxy-D-xylulose-5-phosphate synthase of Pseudomonas putida (strain ATCC 47054 / DSM 6125 / CFBP 8728 / NCIMB 11950 / KT2440).